Reading from the N-terminus, the 639-residue chain is Protein argonaute (639 aa).

Residues 1 to 100 (MYLNLYKIDI…YIKKLFLDND (100 aa)) are N-terminal domain. Residues 101-153 (FYFKKGNNFISNSEVFSLDSNENVNAHLTYKIKIHNISNEYYLSILPKFTFLS) are linker L1. A PAZ domain region spans residues 154-209 (KEPALESAIKSGYLYNIKSGKSFPYISGLDGILKIDIGNNQIVEVAYPENYLFNFT). The interval 210 to 292 (TRDAEKYGFS…KYSFYKNEQP (83 aa)) is linker L2. The mid domain stretch occupies residues 293–424 (LKAIFFFSSK…YVYKMGNFIP (132 aa)). The tract at residues 425–639 (ECKPFILKKM…DYEWKLYIPY (215 aa)) is PIWI domain. Residues Asp-446, Glu-482, Asp-516, and Asn-624 contribute to the active site. Asp-446 is a Mn(2+) binding site. 2 residues coordinate Mn(2+): Asp-516 and Asn-624.

This sequence belongs to the argonaute family. Long pAgo subfamily. Requires Mn(2+) as cofactor.

The protein resides in the cytoplasm. Its function is as follows. An RNA-guided ssDNA endonuclease that may play a role in defense against invading mobile genetic elements. Uses short 5'-OH-ssRNA sequences as guides (gRNA) to bind complementary target DNA (tDNA) or target RNA resulting in target cleavage. The cleavage site is 10 nucleotides (nt) downstream of the target residue base-paired with the 5'-end of the gRNA. Reaction rates are fastest on 5'-OH-gRNA:tDNA followed by 5'-OH-gRNA:target RNA. gRNA between 17-21 nt supports equivalent rates of cleavage, has no preferred 5'-nt. Has weak activity on tDNA with 5'-phospho-gRNA, yielding products 1-2 nt longer. Unlike other characterized prokaryotic Ago proteins symmetric mismatches centered around the cleavage site reduce cleavage efficiency. This Marinitoga piezophila (strain DSM 14283 / JCM 11233 / KA3) protein is Protein argonaute.